Consider the following 548-residue polypeptide: Probable zinc metalloprotease EGY1, chloroplastic (548 aa).

The transit peptide at 1–18 directs the protein to the chloroplast; sequence MGTLTSVAFAAAVNIRFR. A compositionally biased stretch (basic and acidic residues) spans 61 to 76; sequence NSNRDDSIGENGETHK. The disordered stretch occupies residues 61 to 116; sequence NSNRDDSIGENGETHKSSVVKTATFEEEDEETSKSSSTTSSSNEFGSDKTSMPSTI. Residues 103–116 show a composition bias toward polar residues; it reads NEFGSDKTSMPSTI. A run of 8 helical transmembrane segments spans residues 242 to 262, 290 to 310, 326 to 346, 361 to 381, 388 to 408, 416 to 436, 474 to 494, and 516 to 536; these read YVIALILFLLTIGSSVELGIA, LYPFVDAALPLAYGVLGILLF, LSIPYFIPNITLGSFGAITQF, LAGPFAGAALSVSMFAVGLFL, ANDLVQVPSMLFQGSLLLGLI, AALHAATVSIHPLVIAGWCGL, MLGLRVLGGPLALPWGLYVLI, and ALVGIALILVVLTLLPVWDEL.

This sequence belongs to the peptidase M50B family. As to expression, expressed in roots, leaves, cotyledons, hypocotyls, stems, flowers and siliques.

The protein localises to the plastid. Its subcellular location is the chloroplast membrane. In terms of biological role, membrane-associated and ATP-independent metalloprotease required for development of both thylakoid grana and well-organized lamellae in chloroplast. Required for the accumulation of chlorophyll and chlorophyll a/b binding (CAB) proteins (from both PS I and PS II) in chloroplast membranes, and for grana formation and normal chloroplast development. Involved in the regulation of nuclear gene expression in response to ammonium stress and interacts with ABA signaling. Carries out beta-casein degradation in an ATP-independent manner in vitro. In Arabidopsis thaliana (Mouse-ear cress), this protein is Probable zinc metalloprotease EGY1, chloroplastic (EGY1).